Here is a 290-residue protein sequence, read N- to C-terminus: OTU domain-containing protein 6A (290 aa).

The disordered stretch occupies residues 27–117 (QTLKASVPKN…RRHQERMPAA (91 aa)). The segment covering 49 to 68 (SRLEAEMEQRHKQELEKFGE) has biased composition (basic and acidic residues). Basic residues predominate over residues 95–108 (KAQKRRDRRAHQER). The region spanning 142–276 (LEMKTIPADG…GEHYNSVKPI (135 aa)) is the OTU domain. The tract at residues 147–153 (IPADGHC) is cys-loop. The active site involves D150. Residue C153 is the Nucleophile of the active site. A variable-loop region spans residues 211–221 (IVHNASWGGQL). The his-loop stretch occupies residues 259–269 (YLHYACDFGEH). The active site involves H269.

It carries out the reaction Thiol-dependent hydrolysis of ester, thioester, amide, peptide and isopeptide bonds formed by the C-terminal Gly of ubiquitin (a 76-residue protein attached to proteins as an intracellular targeting signal).. In terms of biological role, deubiquitinating enzyme that hydrolyzes 'Lys-27'-, 'Lys-29'- and 'Lys-33'-linked polyubiquitin chains. Also able to hydrolyze 'Lys-11'-linked ubiquitin chains. This is OTU domain-containing protein 6A (Otud6a) from Mus musculus (Mouse).